A 77-amino-acid chain; its full sequence is Small ribosomal subunit protein bS20 (77 aa).

The interval 47–77 (ASSSIDKAESKGLIHKNKASRDKARLAAKLG) is disordered.

It belongs to the bacterial ribosomal protein bS20 family.

Binds directly to 16S ribosomal RNA. This is Small ribosomal subunit protein bS20 from Streptococcus pyogenes serotype M1.